We begin with the raw amino-acid sequence, 161 residues long: uncharacterized protein (161 aa).

The chain crosses the membrane as a helical span at residues 5-25 (GPTLLSLLAALLVSLGLLLWY).

This sequence belongs to the IIV-6 203L/325L family.

It localises to the membrane. This is an uncharacterized protein from Invertebrate iridescent virus 3 (IIV-3).